The following is a 386-amino-acid chain: L-arabinitol 4-dehydrogenase (386 aa).

The Zn(2+) site is built by C55, H80, E81, C110, C113, C116, C124, and E165. NAD(+) contacts are provided by residues 192 to 193, D213, R218, I293, and 317 to 319; these read PI and QYR.

Belongs to the zinc-containing alcohol dehydrogenase family. As to quaternary structure, homotetramer. It depends on Zn(2+) as a cofactor.

It catalyses the reaction L-arabinitol + NAD(+) = L-xylulose + NADH + H(+). Its pathway is carbohydrate degradation; L-arabinose degradation via L-arabinitol; D-xylulose 5-phosphate from L-arabinose (fungal route): step 2/5. Its function is as follows. Catalyzes the NAD-dependent oxidation of L-arabinitol to L-xylulose in the fungal L-arabinose catabolic pathway. L-arabinose catabolism is important for using plant material as a carbon source. Not active with NADP as cosubstrate. In Aspergillus niger (strain ATCC MYA-4892 / CBS 513.88 / FGSC A1513), this protein is L-arabinitol 4-dehydrogenase (ladA).